Reading from the N-terminus, the 25-residue chain is Acyl carrier protein (25 aa).

The Carrier domain maps to 2–25 (ESIEQRVKKIVAEQLGVAEAEIKA).

The protein belongs to the acyl carrier protein (ACP) family. In terms of processing, 4'-phosphopantetheine is transferred from CoA to a specific serine of apo-ACP by AcpS. This modification is essential for activity because fatty acids are bound in thioester linkage to the sulfhydryl of the prosthetic group.

Its subcellular location is the cytoplasm. Its pathway is lipid metabolism; fatty acid biosynthesis. Its function is as follows. Carrier of the growing fatty acid chain in fatty acid biosynthesis. The sequence is that of Acyl carrier protein (acpP) from Alcaligenes faecalis.